The sequence spans 315 residues: Tyrosine recombinase XerC (315 aa).

Residues 13–104 enclose the Core-binding (CB) domain; it reads ADLAAAREEW…GVRSLLRHLE (92 aa). In terms of domain architecture, Tyr recombinase spans 125–309; that stretch reads SLPKPLTADD…DTQRLLEVYD (185 aa). Catalysis depends on residues arginine 168, lysine 193, histidine 261, arginine 264, and histidine 287. Residue tyrosine 296 is the O-(3'-phospho-DNA)-tyrosine intermediate of the active site.

This sequence belongs to the 'phage' integrase family. XerC subfamily. As to quaternary structure, forms a cyclic heterotetrameric complex composed of two molecules of XerC and two molecules of XerD.

The protein resides in the cytoplasm. In terms of biological role, site-specific tyrosine recombinase, which acts by catalyzing the cutting and rejoining of the recombining DNA molecules. The XerC-XerD complex is essential to convert dimers of the bacterial chromosome into monomers to permit their segregation at cell division. It also contributes to the segregational stability of plasmids. The protein is Tyrosine recombinase XerC of Brucella melitensis biotype 1 (strain ATCC 23456 / CCUG 17765 / NCTC 10094 / 16M).